Reading from the N-terminus, the 125-residue chain is Snaclec alboaggregin-A subunit beta (125 aa).

Residues 1-125 (GFDCPFGWSS…TRYPVCKFXG (125 aa)) form the C-type lectin domain. Intrachain disulfides connect C4–C15, C32–C121, and C98–C113.

Belongs to the snaclec family. Heterotetramer of the subunits alpha, alpha', beta and beta'; disulfide-linked. In terms of tissue distribution, expressed by the venom gland.

The protein resides in the secreted. In terms of biological role, potent platelet activator that aggregates platelets via both GPIbalpha (GP1BA) and GPVI (GP6). Induces a tyrosine phosphorylation profile in platelets that resembles this produced by collagen, involving the time dependent tyrosine phosphorylation of Fc receptor gamma chain (FCGR1A), phospholipase Cgamma2 (PLCG2), and LAT. The protein is Snaclec alboaggregin-A subunit beta of Trimeresurus albolabris (White-lipped pit viper).